Reading from the N-terminus, the 445-residue chain is GRAM domain-containing protein 2B (445 aa).

M1 is subject to N-acetylmethionine. Residues M1–D10 show a composition bias toward polar residues. The disordered stretch occupies residues M1–Y119. The segment covering P18–S37 has biased composition (low complexity). Polar residues-rich tracts occupy residues K56–E68 and S82–S93. The span at D94–K112 shows a compositional bias: basic and acidic residues. Residues M123 to K190 form the GRAM domain. A phosphoserine mark is found at S238, S255, and S265. The tract at residues D277–K331 is disordered. The span at Y281–S291 shows a compositional bias: polar residues. The span at G311 to A330 shows a compositional bias: basic and acidic residues.

This chain is GRAM domain-containing protein 2B (Gramd2b), found in Rattus norvegicus (Rat).